The sequence spans 194 residues: Imidazoleglycerol-phosphate dehydratase (194 aa).

Belongs to the imidazoleglycerol-phosphate dehydratase family.

The protein localises to the cytoplasm. The enzyme catalyses D-erythro-1-(imidazol-4-yl)glycerol 3-phosphate = 3-(imidazol-4-yl)-2-oxopropyl phosphate + H2O. It functions in the pathway amino-acid biosynthesis; L-histidine biosynthesis; L-histidine from 5-phospho-alpha-D-ribose 1-diphosphate: step 6/9. This chain is Imidazoleglycerol-phosphate dehydratase, found in Thermus thermophilus (strain ATCC BAA-163 / DSM 7039 / HB27).